The sequence spans 266 residues: Undecaprenyl-diphosphatase (266 aa).

The next 8 membrane-spanning stretches (helical) occupy residues 1 to 21 (MDTFQVIILALIQGLTEFLPI), 39 to 59 (QGLSFDVAVNTGSLFAVVIYF), 87 to 107 (WWIILATLPAVFFGFLAKDFI), 114 to 134 (AEVIAVTTVVFGLLLWWADKM), 149 to 169 (ALLIGFAQALALIPGTSRSGA), 183 to 203 (AAARFSFLMSVPVSLGAAILV), 218 to 238 (ALILGTLISFVAAYACIHYFL), and 246 to 266 (MTPFVIYRLALGAVLCGFIFF).

It belongs to the UppP family.

It localises to the cell inner membrane. It carries out the reaction di-trans,octa-cis-undecaprenyl diphosphate + H2O = di-trans,octa-cis-undecaprenyl phosphate + phosphate + H(+). Catalyzes the dephosphorylation of undecaprenyl diphosphate (UPP). Confers resistance to bacitracin. The chain is Undecaprenyl-diphosphatase from Shewanella baltica (strain OS223).